Consider the following 263-residue polypeptide: tRNA pseudouridine synthase A (263 aa).

The Nucleophile role is filled by Asp-73. Substrate is bound at residue Tyr-131.

It belongs to the tRNA pseudouridine synthase TruA family. Homodimer.

It catalyses the reaction uridine(38/39/40) in tRNA = pseudouridine(38/39/40) in tRNA. Formation of pseudouridine at positions 38, 39 and 40 in the anticodon stem and loop of transfer RNAs. The protein is tRNA pseudouridine synthase A of Mycoplasmoides gallisepticum (strain R(low / passage 15 / clone 2)) (Mycoplasma gallisepticum).